Here is a 616-residue protein sequence, read N- to C-terminus: Chaperone protein HscA (616 aa).

The protein belongs to the heat shock protein 70 family.

Functionally, chaperone involved in the maturation of iron-sulfur cluster-containing proteins. Has a low intrinsic ATPase activity which is markedly stimulated by HscB. Involved in the maturation of IscU. The chain is Chaperone protein HscA from Klebsiella pneumoniae (strain 342).